The primary structure comprises 276 residues: Pantothenate synthetase (276 aa).

27–34 contributes to the ATP binding site; the sequence is MGALHRGH. The active-site Proton donor is H34. Q58 is a binding site for (R)-pantoate. Q58 is a binding site for beta-alanine. 147–150 serves as a coordination point for ATP; that stretch reads GKKD. Q153 contributes to the (R)-pantoate binding site. ATP-binding positions include V176 and 184–187; that span reads LSSR.

It belongs to the pantothenate synthetase family. Homodimer.

Its subcellular location is the cytoplasm. It catalyses the reaction (R)-pantoate + beta-alanine + ATP = (R)-pantothenate + AMP + diphosphate + H(+). It participates in cofactor biosynthesis; (R)-pantothenate biosynthesis; (R)-pantothenate from (R)-pantoate and beta-alanine: step 1/1. Catalyzes the condensation of pantoate with beta-alanine in an ATP-dependent reaction via a pantoyl-adenylate intermediate. This chain is Pantothenate synthetase, found in Helicobacter pylori (strain J99 / ATCC 700824) (Campylobacter pylori J99).